The primary structure comprises 434 residues: Methylenetetrahydrofolate--tRNA-(uracil-5-)-methyltransferase TrmFO (434 aa).

10–15 (GAGLAG) provides a ligand contact to FAD.

It belongs to the MnmG family. TrmFO subfamily. FAD is required as a cofactor.

The protein resides in the cytoplasm. It carries out the reaction uridine(54) in tRNA + (6R)-5,10-methylene-5,6,7,8-tetrahydrofolate + NADH + H(+) = 5-methyluridine(54) in tRNA + (6S)-5,6,7,8-tetrahydrofolate + NAD(+). The enzyme catalyses uridine(54) in tRNA + (6R)-5,10-methylene-5,6,7,8-tetrahydrofolate + NADPH + H(+) = 5-methyluridine(54) in tRNA + (6S)-5,6,7,8-tetrahydrofolate + NADP(+). Functionally, catalyzes the folate-dependent formation of 5-methyl-uridine at position 54 (M-5-U54) in all tRNAs. The sequence is that of Methylenetetrahydrofolate--tRNA-(uracil-5-)-methyltransferase TrmFO from Bacillus anthracis (strain A0248).